A 438-amino-acid polypeptide reads, in one-letter code: Xylose isomerase (438 aa).

Residues H100 and D103 contribute to the active site. E231, E267, H270, D295, D306, D308, and D338 together coordinate Mg(2+).

Belongs to the xylose isomerase family. In terms of assembly, homotetramer. Requires Mg(2+) as cofactor.

It is found in the cytoplasm. It carries out the reaction alpha-D-xylose = alpha-D-xylulofuranose. The chain is Xylose isomerase from Pseudomonas savastanoi pv. phaseolicola (strain 1448A / Race 6) (Pseudomonas syringae pv. phaseolicola (strain 1448A / Race 6)).